The primary structure comprises 106 residues: Guanylate cyclase activator 2B (106 aa).

Residues 1-21 form the signal peptide; that stretch reads MSRSQLWAAVVLLLLLQSAQG. Residues 22–91 constitute a propeptide that is removed on maturation; sequence VYIKYHGFQV…STFKALRTIA (70 aa). 3 disulfide bridges follow: C62-C75, C95-C103, and C98-C106.

This sequence belongs to the guanylin family. As to expression, localized predominantly in intestinal villi and the corticomedullary junction of the kidney.

The protein resides in the secreted. In terms of biological role, endogenous activator of intestinal guanylate cyclase. It stimulates this enzyme through the same receptor binding region as the heat-stable enterotoxins. May be a potent physiological regulator of intestinal fluid and electrolyte transport. May be an autocrine/paracrine regulator of intestinal salt and water transport. The chain is Guanylate cyclase activator 2B (Guca2b) from Mus musculus (Mouse).